A 212-amino-acid chain; its full sequence is Cyclin-dependent kinase inhibitor 3 (212 aa).

The segment covering 1–12 (MKPPSSIQTSEF) has biased composition (polar residues). The disordered stretch occupies residues 1–23 (MKPPSSIQTSEFDSSDEEPIEDE). Residues 1–34 (MKPPSSIQTSEFDSSDEEPIEDEQTPIQISWLPL) are interaction with CDK2. Over residues 13-23 (DSSDEEPIEDE) the composition is skewed to acidic residues. Residues 32–201 (LPLSRVNYSQ…FRDKLAAHLS (170 aa)) form the Tyrosine-protein phosphatase domain. The Phosphocysteine intermediate role is filled by C140.

This sequence belongs to the protein-tyrosine phosphatase family. Interacts with cyclin-dependent kinases such as CDK1, CDK2 and CDK3. Does not interact with CDK4. Interacts (via C-terminus) with phosphorylated CDK2 (via C-terminal helix). Interacts with MS4A3 (via C-terminus); the interaction enhances CDKN3 enzymatic activity.

The protein resides in the cytoplasm. The protein localises to the perinuclear region. It carries out the reaction O-phospho-L-tyrosyl-[protein] + H2O = L-tyrosyl-[protein] + phosphate. The catalysed reaction is O-phospho-L-seryl-[protein] + H2O = L-seryl-[protein] + phosphate. The enzyme catalyses O-phospho-L-threonyl-[protein] + H2O = L-threonyl-[protein] + phosphate. Its function is as follows. May play a role in cell cycle regulation. Dual specificity phosphatase active toward substrates containing either phosphotyrosine or phosphoserine residues. Dephosphorylates CDK2 at 'Thr-160' in a cyclin-dependent manner. This is Cyclin-dependent kinase inhibitor 3 from Sus scrofa (Pig).